Here is a 184-residue protein sequence, read N- to C-terminus: UPF0397 protein SAOUHSC_03020 (184 aa).

5 consecutive transmembrane segments (helical) span residues 11–31 (VVAI…VVIP), 44–64 (AFLA…TGLV), 77–97 (AWWS…WIGL), 116–136 (IGQI…LDIL), and 148–168 (QGVI…TILL).

Belongs to the UPF0397 family.

It is found in the cell membrane. The protein is UPF0397 protein SAOUHSC_03020 of Staphylococcus aureus (strain NCTC 8325 / PS 47).